The following is a 386-amino-acid chain: Methylthioribose-1-phosphate isomerase (386 aa).

D255 (proton donor) is an active-site residue.

It belongs to the eIF-2B alpha/beta/delta subunits family. MtnA subfamily.

The protein localises to the cytoplasm. It localises to the nucleus. The catalysed reaction is 5-(methylsulfanyl)-alpha-D-ribose 1-phosphate = 5-(methylsulfanyl)-D-ribulose 1-phosphate. It participates in amino-acid biosynthesis; L-methionine biosynthesis via salvage pathway; L-methionine from S-methyl-5-thio-alpha-D-ribose 1-phosphate: step 1/6. Catalyzes the interconversion of methylthioribose-1-phosphate (MTR-1-P) into methylthioribulose-1-phosphate (MTRu-1-P). The chain is Methylthioribose-1-phosphate isomerase from Trypanosoma brucei brucei (strain 927/4 GUTat10.1).